Consider the following 404-residue polypeptide: NADH-quinone oxidoreductase subunit D 2 (404 aa).

Belongs to the complex I 49 kDa subunit family. NDH-1 is composed of 14 different subunits. Subunits NuoB, C, D, E, F, and G constitute the peripheral sector of the complex.

The protein resides in the cell inner membrane. The catalysed reaction is a quinone + NADH + 5 H(+)(in) = a quinol + NAD(+) + 4 H(+)(out). Its function is as follows. NDH-1 shuttles electrons from NADH, via FMN and iron-sulfur (Fe-S) centers, to quinones in the respiratory chain. The immediate electron acceptor for the enzyme in this species is believed to be ubiquinone. Couples the redox reaction to proton translocation (for every two electrons transferred, four hydrogen ions are translocated across the cytoplasmic membrane), and thus conserves the redox energy in a proton gradient. This chain is NADH-quinone oxidoreductase subunit D 2, found in Sinorhizobium medicae (strain WSM419) (Ensifer medicae).